We begin with the raw amino-acid sequence, 164 residues long: S-ribosylhomocysteine lyase (164 aa).

Residues His61, His65, and Cys131 each coordinate Fe cation.

The protein belongs to the LuxS family. Homodimer. The cofactor is Fe cation.

It carries out the reaction S-(5-deoxy-D-ribos-5-yl)-L-homocysteine = (S)-4,5-dihydroxypentane-2,3-dione + L-homocysteine. In terms of biological role, involved in the synthesis of autoinducer 2 (AI-2) which is secreted by bacteria and is used to communicate both the cell density and the metabolic potential of the environment. The regulation of gene expression in response to changes in cell density is called quorum sensing. Catalyzes the transformation of S-ribosylhomocysteine (RHC) to homocysteine (HC) and 4,5-dihydroxy-2,3-pentadione (DPD). This Bifidobacterium longum (strain DJO10A) protein is S-ribosylhomocysteine lyase.